A 1594-amino-acid chain; its full sequence is Protein SHORTAGE IN CHIASMATA 1 (1594 aa).

Disordered stretches follow at residues 1148 to 1180 (DSRS…SKKK), 1239 to 1283 (APFK…QPDF), 1396 to 1426 (AADI…YADN), 1491 to 1523 (RSRA…NTKR), and 1536 to 1594 (GGNK…LVWK). Over residues 1151 to 1165 (SVMTDSSSSVSSGPD) the composition is skewed to low complexity. 2 stretches are compositionally biased toward basic and acidic residues: residues 1254–1265 (PSKDPERFDKKS) and 1402–1414 (SSER…DSKY). The span at 1577-1594 (QSLSYTANGTGQTKLVWK) shows a compositional bias: polar residues.

It belongs to the XPF family. As to quaternary structure, interacts with PTD. As to expression, highest levels in young buds, where male meiosis occurs. Also present at low levels in plantlets, leaves, flowers, and roots.

It is found in the nucleus. Functionally, essential for the formation of class I meiotic crossovers. The sequence is that of Protein SHORTAGE IN CHIASMATA 1 from Arabidopsis thaliana (Mouse-ear cress).